A 230-amino-acid chain; its full sequence is MTDSHAALLEALGVALPAELLTIALTHRSYSYENGGLPTNERLEFLGDAVLGLTITEELYHRHPDRAEGDLAKLRASIVNTQALADVGRGLTDEGLGAHLFLGKGEENSGGADKSSILADGVESLLGAIYLEHGLTVVREVILRLFGELLDTAPTLGAGLDWKSSLQELTAARGLGAPAYVVTSTGPDHDKEFSATVVIGEAEYGHGVGRTKKEAELKAAASAYKTLDES.

The RNase III domain occupies 19–134; that stretch reads ELLTIALTHR…LLGAIYLEHG (116 aa). Residue Glu-44 participates in Mg(2+) binding. Residue Asp-48 is part of the active site. Mg(2+) contacts are provided by Asp-120 and Glu-123. The DRBM domain maps to 161–229; the sequence is DWKSSLQELT…AASAYKTLDE (69 aa).

It belongs to the ribonuclease III family. Homodimer. Requires Mg(2+) as cofactor.

The protein localises to the cytoplasm. It catalyses the reaction Endonucleolytic cleavage to 5'-phosphomonoester.. Digests double-stranded RNA. Involved in the processing of primary rRNA transcript to yield the immediate precursors to the all rRNAs (23S, 16S and 5S). Processes some mRNAs, and tRNAs when they are encoded in the rRNA operon. Processes pre-crRNA and tracrRNA of type II CRISPR loci if present in the organism. This Mycolicibacterium smegmatis (strain ATCC 700084 / mc(2)155) (Mycobacterium smegmatis) protein is Ribonuclease 3 (rnc).